Reading from the N-terminus, the 95-residue chain is uncharacterized protein (95 aa).

The segment at 65-95 (DANDYDTTTTEEEDSSTTTTTDNETNSDDDI) is disordered.

This is an uncharacterized protein from Lymantria dispar multicapsid nuclear polyhedrosis virus (LdMNPV).